Here is a 340-residue protein sequence, read N- to C-terminus: Protein FAM50A-A (340 aa).

2 disordered regions span residues 1–22 (MAQY…KKRE) and 123–178 (NLEE…EEEN). Over residues 124–146 (LEEDEECEDEEGEEEESDKEDPP) the composition is skewed to acidic residues. Basic and acidic residues predominate over residues 169 to 178 (PDRDREEEEN).

It localises to the nucleus. Its function is as follows. Probably involved in the regulation of pre-mRNA splicing. The sequence is that of Protein FAM50A-A (fam50a-a) from Xenopus laevis (African clawed frog).